Consider the following 33-residue polypeptide: uncharacterized protein (33 aa).

The tract at residues 1 to 33 is disordered; sequence MGSVIKKRRKRMSKKKHRKLLRRTRVQRRKLGK.

This is an uncharacterized protein from Mycobacterium tuberculosis (strain CDC 1551 / Oshkosh).